The following is a 355-amino-acid chain: IgG receptor FcRn large subunit p51 (355 aa).

Residues 1–24 (MRVPRSQPWGLALLLLLLPGTLRA) form the signal peptide. The tract at residues 25 to 111 (AESHRSLLYH…ALKVFGDRDS (87 aa)) is alpha-1. Topologically, residues 25–300 (AESHRSLLYH…LESPAKSSVP (276 aa)) are extracellular. Residues 112-201 (YTLQGLLGCE…ERGRGNLEWK (90 aa)) are alpha-2. The N-linked (GlcNAc...) asparagine glycan is linked to asparagine 126. The segment at 202–291 (EPPSMRLKAR…GPAQPLTVEL (90 aa)) is alpha-3. Residues 203–292 (PPSMRLKARP…PAQPLTVELE (90 aa)) enclose the Ig-like C1-type domain. Cysteine 222 and cysteine 276 are disulfide-bonded. The tract at residues 293-298 (SPAKSS) is connecting peptide. A helical membrane pass occupies residues 301–321 (VIGISIGFLLLMTVAAGGALL). Residues 322–355 (WRRRKGLPAPWIAFRGDDIGALLPTPGLSKDAES) are Cytoplasmic-facing.

This sequence belongs to the immunoglobulin superfamily. In terms of assembly, fcRn complex consists of two subunits: p51, and p14 which is equivalent to beta-2-microglobulin. It forms an MHC class I-like heterodimer. Interacts with albumin/ALB; this interaction regulates ALB homeostasis. In terms of tissue distribution, expressed in liver and mammary gland of non-lactating animals. Expressed in hepatocytes and in epithelial cells of portal bile ductuli. Not expressed in the brances of portal veins or hepatic arteries. Expressed in the epithelial cells of the acini and ducti in the mammary gland with expression emphasized at the apical side. Not expressed in blood vessels of mammary gland.

The protein localises to the cell membrane. It is found in the endosome membrane. Cell surface receptor that transfers passive humoral immunity from the mother to the newborn. Binds to the Fc region of monomeric immunoglobulin gamma and mediates its selective uptake from milk. IgG in the milk is bound at the apical surface of the intestinal epithelium. The resultant FcRn-IgG complexes are transcytosed across the intestinal epithelium and IgG is released from FcRn into blood or tissue fluids. Throughout life, contributes to effective humoral immunity by recycling IgG and extending its half-life in the circulation. Mechanistically, monomeric IgG binding to FcRn in acidic endosomes of endothelial and hematopoietic cells recycles IgG to the cell surface where it is released into the circulation. In addition of IgG, regulates homeostasis of the other most abundant circulating protein albumin/ALB. This chain is IgG receptor FcRn large subunit p51, found in Camelus dromedarius (Dromedary).